We begin with the raw amino-acid sequence, 227 residues long: MKVSYHGHSVVKIETNGKVILIDPFLTGNSKTDLKAEDVKVDAILLSHGHGDHVGDTVELAKKNNAVVVAPFELATFLSWQGVNTHPMHIGGSHEFDFGKVKFTQAFHGSSYIDEENKTITYTGMPAGILFTAEEKTVYHAGDTALFSDMKLIGELNNIDVAFLPIGDNFTMGPEDAVLAAKWVQAKTVVPIHYNTFPVIEQDPYQFVEKLQNCTGKVLEAGESITL.

The protein belongs to the UPF0173 family.

This Bacillus thuringiensis (strain Al Hakam) protein is UPF0173 metal-dependent hydrolase BALH_4194.